A 242-amino-acid polypeptide reads, in one-letter code: MTHSPLAQFDIKKLIDIKMFGFDVSFTNSSIYMLLASILALTYFYLAFYKRKLVPSRLQVSAEIVYNLVADMLNQNIGVKGRKFIPLVFSLFIFILFCNLLGMTPYSFTATSHIIVTFTLAILVFLIVTIVGFVKHGLRFLTLFLPHGTPLWLAPLMIVIELFTYLARPVSLSLRLAANMMAGHVLLKVIAGFTVSLMIYLKFLPIPIMVILIGFEIFVAILQAYIFTILSCMYLNDAINLH.

6 helical membrane-spanning segments follow: residues 29-49 (SSIYMLLASILALTYFYLAFY), 84-104 (FIPLVFSLFIFILFCNLLGMT), 114-134 (IIVTFTLAILVFLIVTIVGFV), 140-160 (FLTLFLPHGTPLWLAPLMIVI), 181-201 (MAGHVLLKVIAGFTVSLMIYL), and 203-223 (FLPIPIMVILIGFEIFVAILQ).

It belongs to the ATPase A chain family. F-type ATPases have 2 components, CF(1) - the catalytic core - and CF(0) - the membrane proton channel. CF(1) has five subunits: alpha(3), beta(3), gamma(1), delta(1), epsilon(1). CF(0) has three main subunits: a(1), b(2) and c(9-12). The alpha and beta chains form an alternating ring which encloses part of the gamma chain. CF(1) is attached to CF(0) by a central stalk formed by the gamma and epsilon chains, while a peripheral stalk is formed by the delta and b chains.

It localises to the cell inner membrane. Key component of the proton channel; it plays a direct role in the translocation of protons across the membrane. The sequence is that of ATP synthase subunit a from Rickettsia rickettsii (strain Sheila Smith).